The following is a 137-amino-acid chain: Protein cornichon homolog 4 (137 aa).

Transmembrane regions (helical) follow at residues 8 to 28 (LISFFFLIALVGIIVYQLVCL), 53 to 73 (FIVQGVLCVFYLLTGHWFMTL), and 113 to 133 (LAYIVLNLFLTIFWMIYSALD).

It belongs to the cornichon family.

The protein localises to the membrane. The chain is Protein cornichon homolog 4 from Arabidopsis thaliana (Mouse-ear cress).